The following is a 283-amino-acid chain: Ribosomal RNA small subunit methyltransferase H (283 aa).

S-adenosyl-L-methionine-binding positions include G31 to H33, D50, F77, D93, and Q100.

Belongs to the methyltransferase superfamily. RsmH family.

The protein resides in the cytoplasm. It carries out the reaction cytidine(1402) in 16S rRNA + S-adenosyl-L-methionine = N(4)-methylcytidine(1402) in 16S rRNA + S-adenosyl-L-homocysteine + H(+). In terms of biological role, specifically methylates the N4 position of cytidine in position 1402 (C1402) of 16S rRNA. This is Ribosomal RNA small subunit methyltransferase H from Trichodesmium erythraeum (strain IMS101).